Here is an 87-residue protein sequence, read N- to C-terminus: Elongation factor Ts, chloroplastic (87 aa).

Belongs to the EF-Ts family.

The protein localises to the plastid. It is found in the chloroplast. In terms of biological role, associates with the EF-Tu.GDP complex and induces the exchange of GDP to GTP. It remains bound to the aminoacyl-tRNA.EF-Tu.GTP complex up to the GTP hydrolysis stage on the ribosome. This is Elongation factor Ts, chloroplastic (tsf) from Antithamnion sp. (Red alga).